The sequence spans 689 residues: Glycine--tRNA ligase beta subunit (689 aa).

The protein belongs to the class-II aminoacyl-tRNA synthetase family. In terms of assembly, tetramer of two alpha and two beta subunits.

The protein resides in the cytoplasm. The enzyme catalyses tRNA(Gly) + glycine + ATP = glycyl-tRNA(Gly) + AMP + diphosphate. This chain is Glycine--tRNA ligase beta subunit, found in Citrobacter koseri (strain ATCC BAA-895 / CDC 4225-83 / SGSC4696).